A 1486-amino-acid chain; its full sequence is Chromosome partition protein MukB (1486 aa).

Residue G34–S41 coordinates ATP. Coiled-coil stretches lie at residues L326 to Q418, L444 to Q480, and R509 to V603. The flexible hinge stretch occupies residues P666–R783. Coiled coils occupy residues E835–E923, E977–A1115, and V1209–S1266.

Belongs to the SMC family. MukB subfamily. As to quaternary structure, homodimerization via its hinge domain. Binds to DNA via its C-terminal region. Interacts, and probably forms a ternary complex, with MukE and MukF via its C-terminal region. The complex formation is stimulated by calcium or magnesium. Interacts with tubulin-related protein FtsZ.

Its subcellular location is the cytoplasm. It is found in the nucleoid. Functionally, plays a central role in chromosome condensation, segregation and cell cycle progression. Functions as a homodimer, which is essential for chromosome partition. Involved in negative DNA supercoiling in vivo, and by this means organize and compact chromosomes. May achieve or facilitate chromosome segregation by condensation DNA from both sides of a centrally located replisome during cell division. The chain is Chromosome partition protein MukB from Escherichia coli O1:K1 / APEC.